The primary structure comprises 2729 residues: 3-methylorcinaldehyde synthase (2729 aa).

The interval 99–238 (LPAALLIPLA…GTISNLTRQL (140 aa)) is N-terminal acylcarrier protein transacylase domain (SAT). Polar residues predominate over residues 361 to 373 (SLASTVDINSGNG). The segment at 361–391 (SLASTVDINSGNGKTRRVKPADAQSSANSTH) is disordered. One can recognise a Ketosynthase family 3 (KS3) domain in the interval 397-828 (DTDIAIVGMS…GSNASAVLVQ (432 aa)). Catalysis depends on for beta-ketoacyl synthase activity residues cysteine 571, histidine 706, and histidine 748. The interval 942–1230 (FGGQVSCFVG…FLEAGTNSSV (289 aa)) is malonyl-CoA:ACP transacylase (MAT) domain. Serine 1029 functions as the For acyl/malonyl transferase activity in the catalytic mechanism. An N-terminal hotdog fold region spans residues 1345-1479 (ETILTFHSSD…GTVAFKNPGD (135 aa)). A PKS/mFAS DH domain is found at 1345–1669 (ETILTFHSSD…YVKIARPSME (325 aa)). The interval 1374–1665 (KQLLRGHMTL…LGIAYVKIAR (292 aa)) is product template (PT) domain. The Proton acceptor; for dehydratase activity role is filled by histidine 1380. Positions 1513-1669 (DEMLGNQSIY…YVKIARPSME (157 aa)) are C-terminal hotdog fold. The active-site Proton donor; for dehydratase activity is aspartate 1575. Residues 1682–1701 (AGGKTTPQTATKPAAAPVVA) are compositionally biased toward low complexity. Positions 1682-1726 (AGGKTTPQTATKPAAAPVVADHTPRTTESASTVNGVNLDDRKPEG) are disordered. The segment covering 1707–1716 (TTESASTVNG) has biased composition (polar residues). The 75-residue stretch at 1750-1824 (QDMIARVKAV…GLLQCVAGAL (75 aa)) folds into the Carrier domain. Serine 1784 carries the post-translational modification O-(pantetheine 4'-phosphoryl)serine. A compositionally biased stretch (low complexity) spans 1835-1868 (TLTASSDSGINSAKSSILSGTSTSTSTGTTDTGS). The tract at residues 1835-1874 (TLTASSDSGINSAKSSILSGTSTSTSTGTTDTGSDVGQSM) is disordered. The segment at 2086 to 2254 (EINPLRIMET…GYVDWTEGMT (169 aa)) is methyltransferase (C-MeT) domain. The segment at 2344-2599 (ITGGTGGLGA…GWTPADYVAR (256 aa)) is reductase (R) domain.

It functions in the pathway secondary metabolite biosynthesis; terpenoid biosynthesis. Its function is as follows. Non-reducing polyketide synthase; part of the gene cluster that mediates the biosynthesis of xenovulene A, an unusual meroterpenoid that has potent inhibitory effects on the human gamma-aminobutyrate A (GABAA) benzodiazepine receptor. The first step of xenovulene A biosynthesis is the biosynthesis of 3-methylorcinaldehyde performed by the non-reducing polyketide synthase aspks1. The salicylate hydroxylase asL1 then catalyzes the oxidative dearomatization of 3-methylorcinaldehyde to yield a dearomatized hydroxycyclohexadione. The 2-oxoglutarate-dependent dioxygenase asL3 further catalyzes the oxidative ring expansion to provide the first tropolone metabolite. The cytochrome P450 monooxygenase asR2 allows the synthesis of tropolone hemiacetal. In parallel, a previously unrecognised class of terpene cyclase, asR6, produces alpha-humulene from farnesylpyrophosphate (FPP). The putative Diels-Alderase asR5 probably catalyzes the formation of the tropolone-humulene skeleton by linking humulene and the polyketide moiety. Oxidative-ring contractions catalyzed by asL4 and asL6 then processively remove carbon atoms from the polyketide to yield xenovulene A. The polypeptide is 3-methylorcinaldehyde synthase (Sarocladium schorii (Acremonium strictum (strain IMI 501407))).